The primary structure comprises 430 residues: Dihydrolipoyllysine-residue acetyltransferase component of pyruvate dehydrogenase complex (430 aa).

A Lipoyl-binding domain is found at 2 to 77 (AFEFRLPDIG…VVGDVIVKID (76 aa)). Lys-43 carries the post-translational modification N6-lipoyllysine. The segment at 80–122 (DAEDMQFKGHDDDSSSKEEPAKEEAPAEQAPVATQTEEVDENR) is disordered. Residues 84–104 (MQFKGHDDDSSSKEEPAKEEA) are compositionally biased toward basic and acidic residues. Residues 125–162 (KAMPSVRKYAREKGVNIKAVSGSGKNGRITKEDVDAYL) enclose the Peripheral subunit-binding (PSBD) domain. The tract at residues 165-200 (GAPTASNESAASATSEEVAETPAAPAAVTLEGDFPE) is disordered. The span at 166-193 (APTASNESAASATSEEVAETPAAPAAVT) shows a compositional bias: low complexity. His-401 is an active-site residue.

It belongs to the 2-oxoacid dehydrogenase family. In terms of assembly, forms a 24-polypeptide structural core with octahedral symmetry. (R)-lipoate serves as cofactor.

The enzyme catalyses N(6)-[(R)-dihydrolipoyl]-L-lysyl-[protein] + acetyl-CoA = N(6)-[(R)-S(8)-acetyldihydrolipoyl]-L-lysyl-[protein] + CoA. Its function is as follows. The pyruvate dehydrogenase complex catalyzes the overall conversion of pyruvate to acetyl-CoA and CO(2). It contains multiple copies of three enzymatic components: pyruvate dehydrogenase (E1), dihydrolipoamide acetyltransferase (E2) and lipoamide dehydrogenase (E3). In Staphylococcus aureus (strain COL), this protein is Dihydrolipoyllysine-residue acetyltransferase component of pyruvate dehydrogenase complex (pdhC).